Reading from the N-terminus, the 107-residue chain is Thiosulfate sulfurtransferase GlpE (107 aa).

Residues 17 to 105 (ADDNALLVDI…WRIAFPQQVS (89 aa)) form the Rhodanese domain. Cys65 acts as the Cysteine persulfide intermediate in catalysis.

Belongs to the GlpE family.

It is found in the cytoplasm. The catalysed reaction is thiosulfate + hydrogen cyanide = thiocyanate + sulfite + 2 H(+). It carries out the reaction thiosulfate + [thioredoxin]-dithiol = [thioredoxin]-disulfide + hydrogen sulfide + sulfite + 2 H(+). Transferase that catalyzes the transfer of sulfur from thiosulfate to thiophilic acceptors such as cyanide or dithiols. May function in a CysM-independent thiosulfate assimilation pathway by catalyzing the conversion of thiosulfate to sulfite, which can then be used for L-cysteine biosynthesis. The sequence is that of Thiosulfate sulfurtransferase GlpE from Erwinia tasmaniensis (strain DSM 17950 / CFBP 7177 / CIP 109463 / NCPPB 4357 / Et1/99).